Here is a 152-residue protein sequence, read N- to C-terminus: Endoribonuclease YbeY (152 aa).

Positions 118, 122, and 128 each coordinate Zn(2+).

The protein belongs to the endoribonuclease YbeY family. Zn(2+) serves as cofactor.

The protein resides in the cytoplasm. Its function is as follows. Single strand-specific metallo-endoribonuclease involved in late-stage 70S ribosome quality control and in maturation of the 3' terminus of the 16S rRNA. The sequence is that of Endoribonuclease YbeY from Lacticaseibacillus casei (strain BL23) (Lactobacillus casei).